The sequence spans 131 residues: Small ribosomal subunit protein bS16 (131 aa).

The interval 87 to 131 (PGAEGTYRVPTANTKPPRIPGGGAAKAVEAPAEAPAEAETPASES) is disordered. Residues 111-131 (AKAVEAPAEAPAEAETPASES) show a composition bias toward low complexity.

The protein belongs to the bacterial ribosomal protein bS16 family.

This chain is Small ribosomal subunit protein bS16, found in Kineococcus radiotolerans (strain ATCC BAA-149 / DSM 14245 / SRS30216).